We begin with the raw amino-acid sequence, 448 residues long: Phosphoglucosamine mutase (448 aa).

Serine 100 functions as the Phosphoserine intermediate in the catalytic mechanism. The Mg(2+) site is built by serine 100, aspartate 240, aspartate 242, and aspartate 244. Serine 100 carries the post-translational modification Phosphoserine.

It belongs to the phosphohexose mutase family. Mg(2+) serves as cofactor. Activated by phosphorylation.

The enzyme catalyses alpha-D-glucosamine 1-phosphate = D-glucosamine 6-phosphate. Its function is as follows. Catalyzes the conversion of glucosamine-6-phosphate to glucosamine-1-phosphate. This Bacillus mycoides (strain KBAB4) (Bacillus weihenstephanensis) protein is Phosphoglucosamine mutase.